The primary structure comprises 443 residues: D-lactate dehydrogenase (443 aa).

At 1–182 the chain is on the extracellular side; it reads MSWIDELSKI…GGKTIKNSSG (182 aa). In terms of domain architecture, FAD-binding PCMH-type spans 32-209; the sequence is RAAENFVVVK…TKATIRLFPQ (178 aa). A helical transmembrane segment spans residues 183-203; it reads YSLLHLLVGSEGTLAVITKAT. Topologically, residues 204–383 are cytoplasmic; that stretch reads IRLFPQMRDM…WEKSYFEFRK (180 aa). The helical transmembrane segment at 384–404 threads the bilayer; that stretch reads SLLSLAVSLGGVISGEHGIGA. Residues 405–443 lie on the Extracellular side of the membrane; it reads VKLSELEELFPEQFELMRQIKLLFDPKNILNPGKVVRKL.

Belongs to the FAD-binding oxidoreductase/transferase type 4 family. It depends on FAD as a cofactor. The cofactor is Zn(2+).

It localises to the cell membrane. The enzyme catalyses (R)-lactate + A = pyruvate + AH2. In terms of biological role, catalyzes the dehydrogenation of (R)-lactate (D-lactate) to pyruvate. Is likely involved in the utilization of D-lactate as a sole source for both carbon and electrons for dissimilatory sulfate reduction. Cannot use L-lactate as substrate, and NAD(+), horse cytochrome c, methylene blue or dimethylnaphthoquinone as acceptors. Active in vitro with artificial electron acceptors such as 2,6-dichlorophenolindophenol (DCPIP); the physiological acceptor is not known, but potential acceptors include cytochromes or quinones. This Archaeoglobus fulgidus (strain ATCC 49558 / DSM 4304 / JCM 9628 / NBRC 100126 / VC-16) protein is D-lactate dehydrogenase.